A 245-amino-acid chain; its full sequence is Biosynthetic peptidoglycan transglycosylase (245 aa).

A helical transmembrane segment spans residues 13-35 (VGLARWIVYAGSVFAGAWLATQL).

The protein belongs to the glycosyltransferase 51 family.

It localises to the cell inner membrane. The catalysed reaction is [GlcNAc-(1-&gt;4)-Mur2Ac(oyl-L-Ala-gamma-D-Glu-L-Lys-D-Ala-D-Ala)](n)-di-trans,octa-cis-undecaprenyl diphosphate + beta-D-GlcNAc-(1-&gt;4)-Mur2Ac(oyl-L-Ala-gamma-D-Glu-L-Lys-D-Ala-D-Ala)-di-trans,octa-cis-undecaprenyl diphosphate = [GlcNAc-(1-&gt;4)-Mur2Ac(oyl-L-Ala-gamma-D-Glu-L-Lys-D-Ala-D-Ala)](n+1)-di-trans,octa-cis-undecaprenyl diphosphate + di-trans,octa-cis-undecaprenyl diphosphate + H(+). Its pathway is cell wall biogenesis; peptidoglycan biosynthesis. Functionally, peptidoglycan polymerase that catalyzes glycan chain elongation from lipid-linked precursors. The polypeptide is Biosynthetic peptidoglycan transglycosylase (Burkholderia vietnamiensis (strain G4 / LMG 22486) (Burkholderia cepacia (strain R1808))).